The following is a 340-amino-acid chain: Guanine nucleotide-binding protein G(I)/G(S)/G(T) subunit beta-1 (340 aa).

WD repeat units follow at residues 53-83, 95-125, 141-170, 182-212, 224-254, 268-298, and 310-340; these read GHLAKIYAMHWGTDSRLLVSASQDGKLIIWD, LRSSWVMTCAYAPSGNYVACGGLDNICSIYN, GHTGYLSCCRFLDDNQIVTSSGDTTCALWD, GHTGDVMSLSLAPDTRLFVSGACDASAKLWD, GHESDINAICFFPNGNAFATGSDDATCRLFD, NIICGITSVAFSKSGRLLLAGYDDFNCNVWD, and GHDNRVSCLGVTDDGMAVATGSWDSFLKIWN.

The protein belongs to the WD repeat G protein beta family. G proteins are composed of 3 units, alpha, beta and gamma.

Functionally, guanine nucleotide-binding proteins (G proteins) are involved as a modulator or transducer in various transmembrane signaling systems. The beta and gamma chains are required for the GTPase activity, for replacement of GDP by GTP, and for G protein-effector interaction. The protein is Guanine nucleotide-binding protein G(I)/G(S)/G(T) subunit beta-1 (gnb1) of Danio rerio (Zebrafish).